The primary structure comprises 448 residues: Probable glycine dehydrogenase (decarboxylating) subunit 1 (448 aa).

This sequence belongs to the GcvP family. N-terminal subunit subfamily. As to quaternary structure, the glycine cleavage system is composed of four proteins: P, T, L and H. In this organism, the P 'protein' is a heterodimer of two subunits.

The catalysed reaction is N(6)-[(R)-lipoyl]-L-lysyl-[glycine-cleavage complex H protein] + glycine + H(+) = N(6)-[(R)-S(8)-aminomethyldihydrolipoyl]-L-lysyl-[glycine-cleavage complex H protein] + CO2. The glycine cleavage system catalyzes the degradation of glycine. The P protein binds the alpha-amino group of glycine through its pyridoxal phosphate cofactor; CO(2) is released and the remaining methylamine moiety is then transferred to the lipoamide cofactor of the H protein. The chain is Probable glycine dehydrogenase (decarboxylating) subunit 1 (gcvPA) from Bacillus subtilis (strain 168).